The chain runs to 98 residues: Large ribosomal subunit protein uL23 (98 aa).

It belongs to the universal ribosomal protein uL23 family. As to quaternary structure, part of the 50S ribosomal subunit. Contacts protein L29, and trigger factor when it is bound to the ribosome.

Functionally, one of the early assembly proteins it binds 23S rRNA. One of the proteins that surrounds the polypeptide exit tunnel on the outside of the ribosome. Forms the main docking site for trigger factor binding to the ribosome. The protein is Large ribosomal subunit protein uL23 of Methylobacterium radiotolerans (strain ATCC 27329 / DSM 1819 / JCM 2831 / NBRC 15690 / NCIMB 10815 / 0-1).